A 507-amino-acid chain; its full sequence is Maturase K (507 aa).

It belongs to the intron maturase 2 family. MatK subfamily.

It is found in the plastid. Its subcellular location is the chloroplast. In terms of biological role, usually encoded in the trnK tRNA gene intron. Probably assists in splicing its own and other chloroplast group II introns. In Asimina triloba (Pawpaw), this protein is Maturase K.